A 383-amino-acid polypeptide reads, in one-letter code: Dephospho-CoA kinase (383 aa).

A DPCK domain is found at R3–L201. G11 to T16 contributes to the ATP binding site. Positions P196–V383 are UPF0157.

In the N-terminal section; belongs to the CoaE family. This sequence in the C-terminal section; belongs to the UPF0157 (GrpB) family.

The protein resides in the cytoplasm. It carries out the reaction 3'-dephospho-CoA + ATP = ADP + CoA + H(+). Its pathway is cofactor biosynthesis; coenzyme A biosynthesis; CoA from (R)-pantothenate: step 5/5. Functionally, catalyzes the phosphorylation of the 3'-hydroxyl group of dephosphocoenzyme A to form coenzyme A. This is Dephospho-CoA kinase from Nocardia farcinica (strain IFM 10152).